Consider the following 126-residue polypeptide: Protein ApaG (126 aa).

Residues 2–126 (SALDDSIRVE…FRLALPGLLH (125 aa)) form the ApaG domain.

This Shewanella sp. (strain MR-7) protein is Protein ApaG.